A 343-amino-acid chain; its full sequence is Heat-inducible transcription repressor HrcA (343 aa).

Belongs to the HrcA family.

Functionally, negative regulator of class I heat shock genes (grpE-dnaK-dnaJ and groELS operons). Prevents heat-shock induction of these operons. The polypeptide is Heat-inducible transcription repressor HrcA (Phytoplasma mali (strain AT)).